The sequence spans 322 residues: Packaging protein 3 (322 aa).

The disordered stretch occupies residues 1–24 (MHPILKNIRSQPDQGRAEEHNPEL). Residues 1–127 (MHPILKNIRS…RDVERWQHDT (127 aa)) are interaction with packaging protein 1.

It belongs to the adenoviridae packaging protein 3 family. Part of the genome packaging complex composed of packaging proteins 1, 2 and 3; this complex specifically binds to the packaging sequence on the left end of viral genomic DNA and performs packaging of the viral genome. Interacts with hexon-linking protein IIIa; this interaction is required to promote correct genome packaging. In terms of processing, cleaved at different sites by the viral protease during virion maturation.

The protein resides in the host nucleus. Its function is as follows. Involved in viral genome packaging through its interaction with packaging proteins 1 and 2. After proteolytic cleavage by adenovirus protease, L1 52/55k protein is removed from the capsid during viral maturation. The protein is Packaging protein 3 of Pantherophis guttatus (Corn snake).